A 298-amino-acid polypeptide reads, in one-letter code: Troponin T, cardiac muscle (298 aa).

Residues Met1 to Met70 show a composition bias toward acidic residues. Disordered stretches follow at residues Met1 to Val95 and Phe120 to Lys219. Ser2 is modified (N-acetylserine). Position 2 is a phosphoserine; by CK2 (Ser2). Composition is skewed to basic and acidic residues over residues Phe120 to Arg183 and Gln203 to Lys219. A Phosphothreonine; by PKC/PRKCA modification is found at Thr204. Position 208 is a phosphoserine; by PKC/PRKCA (Ser208). Position 213 is a phosphothreonine; by PKC/PRKCA and RAF1 (Thr213). Thr294 carries the post-translational modification Phosphothreonine; by PKC/PRKCA.

This sequence belongs to the troponin T family. In terms of processing, phosphorylation at Thr-213 by PRKCA induces significant reduction in myofilament calcium sensitivity and actomyosin ATPase activity. In terms of tissue distribution, heart. The fetal heart shows a greater expression in the atrium than in the ventricle, while the adult heart shows a greater expression in the ventricle than in the atrium. Isoform 6 predominates in normal adult heart. Isoforms 1, 7 and 8 are expressed in fetal heart. Isoform 7 is also expressed in failing adult heart.

In terms of biological role, troponin T is the tropomyosin-binding subunit of troponin, the thin filament regulatory complex which confers calcium-sensitivity to striated muscle actomyosin ATPase activity. The chain is Troponin T, cardiac muscle (TNNT2) from Homo sapiens (Human).